We begin with the raw amino-acid sequence, 249 residues long: 3-deoxy-D-manno-octulosonic acid kinase (249 aa).

Asp175 is an active-site residue.

The protein belongs to the protein kinase superfamily. KdkA/RfaP family.

It is found in the cell inner membrane. The catalysed reaction is an alpha-Kdo-(2-&gt;6)-lipid IVA + ATP = a 4-O-phospho-alpha-Kdo-(2-&gt;6)-lipid IVA + ADP + H(+). It participates in bacterial outer membrane biogenesis; LPS core biosynthesis. In terms of biological role, catalyzes the ATP-dependent phosphorylation of the 3-deoxy-D-manno-octulosonic acid (Kdo) residue in Kdo-lipid IV(A) at the 4-OH position. This Xanthomonas campestris pv. campestris (strain 8004) protein is 3-deoxy-D-manno-octulosonic acid kinase.